Here is an 852-residue protein sequence, read N- to C-terminus: Potassium voltage-gated channel subfamily KQT member 2 (852 aa).

The Cytoplasmic portion of the chain corresponds to 1–90 (MVQKSRNGGV…LYNVLERPRG (90 aa)). Ser-52 carries the post-translational modification Phosphoserine; by PKA. The helical transmembrane segment at 91–113 (WAFIYHAYVFLLVFSCLVLSVFS) threads the bilayer. Topologically, residues 114-123 (TIKEYEKSSE) are extracellular. The chain crosses the membrane as a helical span at residues 124 to 145 (GALYILEIVTIVVFGVEYFVRI). Over 146-163 (WAAGCCCRYRGWRGRLKF) the chain is Cytoplasmic. Residues 164–183 (ARKPFCVIDIMVLIASIAVL) traverse the membrane as a helical segment. The Extracellular portion of the chain corresponds to 184 to 196 (AAGSQGNVFATSA). A helical; Voltage-sensor membrane pass occupies residues 197–215 (LRSLRFLQILRMIRMDRRG). Arg-214 is an a 1,2-diacyl-sn-glycero-3-phospho-(1D-myo-inositol-4,5-bisphosphate) binding site. Residues 216–227 (GTWKLLGSVVYA) are Cytoplasmic-facing. The interval 222–323 (GSVVYAHSKE…SGFALKVQEQ (102 aa)) is mediates interaction with SLC5A3. A helical membrane pass occupies residues 228 to 253 (HSKELVTAWYIGFLCLILASFLVYLA). A 1,2-diacyl-sn-glycero-3-phospho-(1D-myo-inositol-4,5-bisphosphate) is bound at residue Lys-230. Residues 254–263 (EKGENDHFDT) are Extracellular-facing. Positions 264 to 276 (YADALWWGLITLT) form an intramembrane region, pore-forming. The Selectivity filter signature appears at 277 to 282 (TIGYGD). Topologically, residues 277-287 (TIGYGDKYPQT) are extracellular. A helical transmembrane segment spans residues 288–314 (WNGRLLAATFTLIGVSFFALPAGILGS). Over 315 to 852 (GFALKVQEQH…GDVAWAGPRK (538 aa)) the chain is Cytoplasmic. The tract at residues 317–522 (ALKVQEQHRQ…EDLTPGLKVS (206 aa)) is mediates interaction with calmodulin. Lys-327 serves as a coordination point for a 1,2-diacyl-sn-glycero-3-phospho-(1D-myo-inositol-4,5-bisphosphate). The tract at residues 404 to 469 (TFRKEPQPEP…SKVPKSWSFG (66 aa)) is disordered. Positions 440–457 (PQAQTVRRSPSADQSLDD) are enriched in polar residues. Phosphoserine is present on residues Ser-448, Ser-450, Ser-454, Ser-458, Ser-460, and Ser-489. Disordered stretches follow at residues 579–601 (GPTITDKDRTKGPAETELPEDPS), 643–662 (GAKEPEPAPPYHSPEDSRDH), and 672–718 (IVRS…DHGS). Residues 583 to 592 (TDKDRTKGPA) are compositionally biased toward basic and acidic residues. Position 655 is a phosphoserine (Ser-655). Phosphoserine is present on residues Ser-781 and Ser-783. Residues 818 to 852 (ESDTDSDLCTPCGPPPRSATGEGPFGDVAWAGPRK) are disordered.

This sequence belongs to the potassium channel family. KQT (TC 1.A.1.15) subfamily. Kv7.2/KCNQ2 sub-subfamily. As to quaternary structure, heterotetramer with KCNQ3; forms heterotetrameric M-channel responsible for the M-current. Homotetrameric; forms a functional homotetrameric channel resulting in the expression of a small M-current. Interacts with calmodulin; the interaction is calcium-independent, constitutive and participates in the proper assembly of a functional M-channel. May associate with KCNE2. Interacts with IQCJ-SCHIP1. Interacts (via the pore module) with SLC5A3/SMIT1; forms a coregulatory complex that alters ion selectivity, voltage dependence and gating kinetics of the channel. Interacts with AKAP5; the interaction may help KCNQ2 channel complex to retain calcium-bound calmodulin. Post-translationally, KCNQ2/KCNQ3 heteromeric current can be increased by intracellular cyclic AMP, an effect that depends on phosphorylation of Ser-52 in the N-terminal region. In terms of processing, KCNQ2/KCNQ3 are ubiquitinated by NEDD4L. Ubiquitination leads to protein degradation. Degradation induced by NEDD4L is inhibited by USP36. As to expression, expressed in brain and sympathetic ganglia. In brain, expressed in cortex, hippocampus, and cerebellum. In sympathetic ganglia, expressed at lower levels in celiac ganglia and superior mesenteric ganglia than in superior cervical ganglia.

The protein localises to the cell membrane. The catalysed reaction is K(+)(in) = K(+)(out). It carries out the reaction Rb(+)(in) = Rb(+)(out). The enzyme catalyses Cs(+)(in) = Cs(+)(out). It catalyses the reaction Na(+)(in) = Na(+)(out). Phosphatidylinositol-4,5-bisphosphate (PIP2) potentiates the activation of KCNQ channels by enhancing the electro-mechanical coupling of the voltage-sensing domain (VSD) and the pore-forming domain (PD). In the closed state of the channel, PIP2 is anchored at the S2-S3 loop; upon channel activation, PIP2 interacts with the S4-S5 linker and is involved in channel gating. Calcium suppresses KCNQ2 and KCNQ2-KCNQ3 channel currents, with calcium-bound calmodulin inducing a change in channel configuration which leads to the reduction of channel affinity for PIP2 and subsequent current suppression. Functionally, pore-forming subunit of the voltage-gated potassium (Kv) M-channel which is responsible for the M-current, a key controller of neuronal excitability. M-channel is composed of pore-forming subunits KCNQ2 and KCNQ3 assembled as heterotetramers. The native M-current has a slowly activating and deactivating potassium conductance which plays a critical role in determining the subthreshold electrical excitability of neurons as well as the responsiveness to synaptic inputs. M-channel is selectively permeable in vitro to other cations besides potassium, in decreasing order of affinity K(+) &gt; Rb(+) &gt; Cs(+) &gt; Na(+). M-channel association with SLC5A3/SMIT1 alters channel ion selectivity, increasing Na(+) and Cs(+) permeation relative to K(+). Suppressed by activation of the muscarinic acetylcholine receptor CHRM1. This is Potassium voltage-gated channel subfamily KQT member 2 from Rattus norvegicus (Rat).